A 168-amino-acid polypeptide reads, in one-letter code: NADH dehydrogenase [ubiquinone] 1 alpha subcomplex assembly factor 2 (168 aa).

The span at 108–118 (KEKLLQEESNK) shows a compositional bias: basic and acidic residues. The tract at residues 108–168 (KEKLLQEESN…MPHGDKGHSQ (61 aa)) is disordered. A Phosphoserine modification is found at Ser133. Polar residues predominate over residues 144-155 (ESPTSTGKTFQP).

The protein belongs to the complex I NDUFA12 subunit family. Interacts with ARMC9.

It is found in the mitochondrion. Its function is as follows. Acts as a molecular chaperone for mitochondrial complex I assembly. Complex I functions in the transfer of electrons from NADH to the respiratory chain. The immediate electron acceptor for the enzyme is believed to be ubiquinone. Is involved in the initial steps of cilia formation, including removal of CP110 from the mother centrioles, docking of membrane vesicles to the mother centrioles, and establishment of the transition zone. The chain is NADH dehydrogenase [ubiquinone] 1 alpha subcomplex assembly factor 2 (NDUFAF2) from Bos taurus (Bovine).